We begin with the raw amino-acid sequence, 114 residues long: Type 4 adapter protein IcmS (114 aa).

In terms of assembly, the T4BSS is a complex nanomachine composed of several subcomplexes. This subunit is part of the Type IV Coupling Complex (T4CC), a subcomplex composed of the DotLMNYZ core and the IcmSW-LvgA adapter subunits, linked by the C-terminal tail of DotL. Interacts with IcmW. IcmS and IcmW form a stable complex. Interacts directly with the type 4 coupling protein DotL. Interacts with LvgA. Interacts with effector proteins.

It localises to the cytoplasm. Interaction with DotL is critical for the export of IcmSW-dependent substrates. Functionally, component of the Dot/Icm type IVB secretion system (T4BSS), which is used to inject bacterial effector proteins into eukaryotic host cells. Part of a subcomplex which recruits effector proteins and delivers them to the core transmembrane subcomplex. The IcmS/IcmW protein complex plays an important role in protein translocation by interacting with multiple Dot/Icm effector proteins to facilitate their translocation into host cells. Interaction promotes conformational changes in the effector protein, which may facilitate display of a C-terminal translocation signal. May maintain the substrates in a translocation competent form. Required for intracellular growth in host cells, replicative phagosome formation and phagosome trafficking. IcmS is required for IcmW stability. The protein is Type 4 adapter protein IcmS of Legionella pneumophila subsp. pneumophila (strain Philadelphia 1 / ATCC 33152 / DSM 7513).